A 79-amino-acid polypeptide reads, in one-letter code: Small ribosomal subunit protein uS17 (79 aa).

The protein belongs to the universal ribosomal protein uS17 family. Part of the 30S ribosomal subunit.

In terms of biological role, one of the primary rRNA binding proteins, it binds specifically to the 5'-end of 16S ribosomal RNA. This is Small ribosomal subunit protein uS17 from Caulobacter vibrioides (strain NA1000 / CB15N) (Caulobacter crescentus).